We begin with the raw amino-acid sequence, 189 residues long: Elongation factor P (189 aa).

This sequence belongs to the elongation factor P family.

It is found in the cytoplasm. It participates in protein biosynthesis; polypeptide chain elongation. Its function is as follows. Involved in peptide bond synthesis. Stimulates efficient translation and peptide-bond synthesis on native or reconstituted 70S ribosomes in vitro. Probably functions indirectly by altering the affinity of the ribosome for aminoacyl-tRNA, thus increasing their reactivity as acceptors for peptidyl transferase. This Rhizobium rhizogenes (strain K84 / ATCC BAA-868) (Agrobacterium radiobacter) protein is Elongation factor P.